We begin with the raw amino-acid sequence, 243 residues long: Carboxy-S-adenosyl-L-methionine synthase (243 aa).

S-adenosyl-L-methionine is bound by residues Tyr-40, 65-67, 90-91, 118-119, Asn-133, and Arg-200; these read GCS, DN, and DI.

Belongs to the class I-like SAM-binding methyltransferase superfamily. Cx-SAM synthase family. Homodimer.

It carries out the reaction prephenate + S-adenosyl-L-methionine = carboxy-S-adenosyl-L-methionine + 3-phenylpyruvate + H2O. Functionally, catalyzes the conversion of S-adenosyl-L-methionine (SAM) to carboxy-S-adenosyl-L-methionine (Cx-SAM). The sequence is that of Carboxy-S-adenosyl-L-methionine synthase from Shewanella piezotolerans (strain WP3 / JCM 13877).